Here is a 408-residue protein sequence, read N- to C-terminus: Acetate kinase (408 aa).

Asn7 contributes to the Mg(2+) binding site. Residue Lys14 participates in ATP binding. Substrate is bound at residue Arg91. The Proton donor/acceptor role is filled by Asp148. Residues 208–212, 283–285, and 331–335 contribute to the ATP site; these read HLGNG, DFR, and GIGEN. Glu384 serves as a coordination point for Mg(2+).

Belongs to the acetokinase family. As to quaternary structure, homodimer. Requires Mg(2+) as cofactor. It depends on Mn(2+) as a cofactor.

It is found in the cytoplasm. It carries out the reaction acetate + ATP = acetyl phosphate + ADP. The protein operates within metabolic intermediate biosynthesis; acetyl-CoA biosynthesis; acetyl-CoA from acetate: step 1/2. Functionally, catalyzes the formation of acetyl phosphate from acetate and ATP. Can also catalyze the reverse reaction. The chain is Acetate kinase from Methanosarcina barkeri (strain Fusaro / DSM 804).